The chain runs to 130 residues: Small ribosomal subunit protein uS9 (130 aa).

The protein belongs to the universal ribosomal protein uS9 family.

The sequence is that of Small ribosomal subunit protein uS9 from Caldicellulosiruptor bescii (strain ATCC BAA-1888 / DSM 6725 / KCTC 15123 / Z-1320) (Anaerocellum thermophilum).